Reading from the N-terminus, the 555-residue chain is NADH-ubiquinone oxidoreductase chain 5 (555 aa).

A run of 15 helical transmembrane segments spans residues L37–I57, F69–Y89, I90–W110, F133–L153, L155–A175, T197–V217, L230–V250, V257–I275, C287–I307, L323–L343, I366–L388, E406–F426, W454–I474, I494–N516, and R534–Y554.

This sequence belongs to the complex I subunit 5 family.

The protein resides in the mitochondrion inner membrane. The enzyme catalyses a ubiquinone + NADH + 5 H(+)(in) = a ubiquinol + NAD(+) + 4 H(+)(out). In terms of biological role, core subunit of the mitochondrial membrane respiratory chain NADH dehydrogenase (Complex I) that is believed to belong to the minimal assembly required for catalysis. Complex I functions in the transfer of electrons from NADH to the respiratory chain. The immediate electron acceptor for the enzyme is believed to be ubiquinone. This Candida parapsilosis (Yeast) protein is NADH-ubiquinone oxidoreductase chain 5 (ND5).